The sequence spans 332 residues: MRKITVFGMGSFGTALANVLAQNGHDVLMWGKNVENVDELNTHHMNKNYLKDAKLDSSIKATVDLNKAVQFSDIYLMALPTKAIREVSKDIDQLLTSKKTFIHVAKGIENDTFKRVSEMIEDSISSEHNGGIGVLSGPSHAEEVVIKQPTTVAASSKDNNVSKLIQDLFMNDYLRVYTNNDLVGVELGGALKNIIAIASGIVAGMGWGDNAKAALMTRGLAEISRLGEKLGADPMTFLGLGGIGDLIVTCTSTHSRNYTLGFKLGQGKTAEEALKEMKMVVEGIYTTKSVYHLAQQEGVEMPITNALYEVLFEDVPVSKSVRTLMERDKKAE.

4 residues coordinate NADPH: Ser-11, Phe-12, Lys-32, and Lys-106. 3 residues coordinate sn-glycerol 3-phosphate: Lys-106, Gly-137, and Ser-139. Position 141 (Ala-141) interacts with NADPH. Positions 192, 245, 255, 256, and 257 each coordinate sn-glycerol 3-phosphate. Lys-192 acts as the Proton acceptor in catalysis. Arg-256 provides a ligand contact to NADPH. NADPH-binding residues include Val-280 and Glu-282.

The protein belongs to the NAD-dependent glycerol-3-phosphate dehydrogenase family.

The protein localises to the cytoplasm. It catalyses the reaction sn-glycerol 3-phosphate + NAD(+) = dihydroxyacetone phosphate + NADH + H(+). The catalysed reaction is sn-glycerol 3-phosphate + NADP(+) = dihydroxyacetone phosphate + NADPH + H(+). It participates in membrane lipid metabolism; glycerophospholipid metabolism. Its function is as follows. Catalyzes the reduction of the glycolytic intermediate dihydroxyacetone phosphate (DHAP) to sn-glycerol 3-phosphate (G3P), the key precursor for phospholipid synthesis. The chain is Glycerol-3-phosphate dehydrogenase [NAD(P)+] from Staphylococcus epidermidis (strain ATCC 12228 / FDA PCI 1200).